We begin with the raw amino-acid sequence, 140 residues long: HTH-type transcriptional regulator AdhR (140 aa).

Residues 1–69 form the HTH merR-type domain; sequence MNIAQVAKQF…IEALIEYTTL (69 aa). The H-T-H motif DNA-binding region spans 3–22; sequence IAQVAKQFGLTAATLRYYER. Positions 75 to 125 form a coiled coil; the sequence is RTVEARKNILADERQRLIEKRKEIDETIKRLDTKIKDYDGKLRENEAKLKS. Positions 120–140 are disordered; that stretch reads EAKLKSRPKTESLHGSVEQRR.

In terms of biological role, transcriptional regulator involved in the response to aldehyde stress. Binds to the promoter region of the adhA-yraA operon, the yraC and its own promoter region; binding is unchanged in the presence of aldehydes. The polypeptide is HTH-type transcriptional regulator AdhR (adhR) (Bacillus subtilis (strain 168)).